We begin with the raw amino-acid sequence, 483 residues long: UDP-N-acetylmuramate--L-alanine ligase (483 aa).

ATP is bound at residue 125 to 131 (GTHGKTT).

The protein belongs to the MurCDEF family.

It is found in the cytoplasm. The catalysed reaction is UDP-N-acetyl-alpha-D-muramate + L-alanine + ATP = UDP-N-acetyl-alpha-D-muramoyl-L-alanine + ADP + phosphate + H(+). It functions in the pathway cell wall biogenesis; peptidoglycan biosynthesis. Its function is as follows. Cell wall formation. This chain is UDP-N-acetylmuramate--L-alanine ligase, found in Pseudoalteromonas translucida (strain TAC 125).